The primary structure comprises 200 residues: Holliday junction branch migration complex subunit RuvA (200 aa).

Positions 1 to 63 (MYAYIKGTLT…EDAQLLYGFI (63 aa)) are domain I. Residues 64–142 (NQEEKDMFLS…INDVDSSQIL (79 aa)) form a domain II region. Residues 143–149 (NTDTQDH) form a flexible linker region. The tract at residues 150-200 (ANAPIIKEALLALEALGYSKRELTKVEKSLSKETFDSVDDAVKRGLQLLIA) is domain III.

It belongs to the RuvA family. As to quaternary structure, homotetramer. Forms an RuvA(8)-RuvB(12)-Holliday junction (HJ) complex. HJ DNA is sandwiched between 2 RuvA tetramers; dsDNA enters through RuvA and exits via RuvB. An RuvB hexamer assembles on each DNA strand where it exits the tetramer. Each RuvB hexamer is contacted by two RuvA subunits (via domain III) on 2 adjacent RuvB subunits; this complex drives branch migration. In the full resolvosome a probable DNA-RuvA(4)-RuvB(12)-RuvC(2) complex forms which resolves the HJ.

It is found in the cytoplasm. In terms of biological role, the RuvA-RuvB-RuvC complex processes Holliday junction (HJ) DNA during genetic recombination and DNA repair, while the RuvA-RuvB complex plays an important role in the rescue of blocked DNA replication forks via replication fork reversal (RFR). RuvA specifically binds to HJ cruciform DNA, conferring on it an open structure. The RuvB hexamer acts as an ATP-dependent pump, pulling dsDNA into and through the RuvAB complex. HJ branch migration allows RuvC to scan DNA until it finds its consensus sequence, where it cleaves and resolves the cruciform DNA. The sequence is that of Holliday junction branch migration complex subunit RuvA from Staphylococcus saprophyticus subsp. saprophyticus (strain ATCC 15305 / DSM 20229 / NCIMB 8711 / NCTC 7292 / S-41).